The sequence spans 258 residues: uncharacterized protein (258 aa).

The N-terminal stretch at 1-23 (MVWCHYILLVLTFFLFTTFFTAA) is a signal peptide. Residues 24 to 64 (CPAIFTWLNSLFRLSNDSPHVVHTSIAEVGDIEDGRVDKDG) lie on the Cytoplasmic side of the membrane. The helical transmembrane segment at 65–85 (VLFVDLEFFLGCLPFFFFALV) threads the bilayer. The Extracellular portion of the chain corresponds to 86 to 123 (DQSSSSSVCKPLSPSDAKRSSNSLLRLSLVSSNDSDSS). Asn-118 is a glycosylation site (N-linked (GlcNAc...) asparagine). Residues 124–144 (VSVSTFAFFFFFLFFLFFVFT) traverse the membrane as a helical segment. Topologically, residues 145–230 (CTFSSELTSS…SSSISFRISS (86 aa)) are cytoplasmic. Residues 231-251 (IFFLCSLVFMWFFNCFSDLNV) traverse the membrane as a helical segment. The Extracellular segment spans residues 252–258 (LLQIKHS).

Its subcellular location is the membrane. This is an uncharacterized protein from Saccharomyces cerevisiae (strain ATCC 204508 / S288c) (Baker's yeast).